A 304-amino-acid chain; its full sequence is D-alanine--D-alanine ligase (304 aa).

In terms of domain architecture, ATP-grasp spans 103 to 299 (KLIWQALGLP…FADLCIEILK (197 aa)). Position 129 to 184 (129 to 184 (EEKLGLPMFVKPAAEGSSVGVVKVKEKGRLKSVYEELKHLQGEIIAERFIGGGEYS)) interacts with ATP. Mg(2+) contacts are provided by Asp253, Glu266, and Asn268.

Belongs to the D-alanine--D-alanine ligase family. Mg(2+) serves as cofactor. Mn(2+) is required as a cofactor.

It localises to the cytoplasm. The catalysed reaction is 2 D-alanine + ATP = D-alanyl-D-alanine + ADP + phosphate + H(+). It participates in cell wall biogenesis; peptidoglycan biosynthesis. Its function is as follows. Cell wall formation. The protein is D-alanine--D-alanine ligase of Neisseria gonorrhoeae (strain ATCC 700825 / FA 1090).